A 587-amino-acid polypeptide reads, in one-letter code: Arginine--tRNA ligase (587 aa).

A 'HIGH' region motif is present at residues 126–136 (ANPTGPLHVGH).

It belongs to the class-I aminoacyl-tRNA synthetase family. Monomer.

Its subcellular location is the cytoplasm. The catalysed reaction is tRNA(Arg) + L-arginine + ATP = L-arginyl-tRNA(Arg) + AMP + diphosphate. This Aromatoleum aromaticum (strain DSM 19018 / LMG 30748 / EbN1) (Azoarcus sp. (strain EbN1)) protein is Arginine--tRNA ligase.